A 247-amino-acid chain; its full sequence is 5'-nucleotidase SurE (247 aa).

Residues Asp8, Asp9, Ser39, and Asn91 each contribute to the a divalent metal cation site.

The protein belongs to the SurE nucleotidase family. It depends on a divalent metal cation as a cofactor.

Its subcellular location is the cytoplasm. It catalyses the reaction a ribonucleoside 5'-phosphate + H2O = a ribonucleoside + phosphate. Its function is as follows. Nucleotidase that shows phosphatase activity on nucleoside 5'-monophosphates. The chain is 5'-nucleotidase SurE from Aromatoleum aromaticum (strain DSM 19018 / LMG 30748 / EbN1) (Azoarcus sp. (strain EbN1)).